The following is a 557-amino-acid chain: MSKLIRRVVTVLALTSMASSFASGKIEAAAAESLATRFIASTENADDNVFQATAKKVRFGRNKNQRQEQKHTEAFCDKEFYPCEGGQCQPVDATQESCYGKMYCVRVNDDCNVEISQSVPEYATVGSPYPIEILAVGKKDCVNVVITQQLPCEVEFVSSDPATTPTSDSKLIWTIDRLGQGEKCKITVWVKPLKEGCCFTAATVCACPELRSYTKCGQPAICIKQEGPECACLRCPVCYKIEVCNTGSAIARNVVVDNPVPDGYTHASGQRVLSFNLGDMRPGDSKCFCVEFCPQKRGKVTNVATVSYCGGHKCSANVTTVVNEPCVQVNISGADWSYVCKPVEYTIVVSNPGDLKLYDVVIEDTAPSGATILEAAGAEICCNKAVWCIKEMCPGETLQFKVVAKAQSPGKFTNQVVVKTNSDCGTCTSCAEVTTHWKGLAATHMCVIDTNDPICVGENTVYRICVTNRGSAEDTNVSLILKFSKELQPVSSSGPTKGTITGNTVVFDALPKLGSKESVEFSVTLKGIAPGDARGEAILSSDTLTVPVADTENTHVY.

Residues 1–22 (MSKLIRRVVTVLALTSMASSFA) form the signal peptide. A propeptide spanning residues 23-40 (SGKIEAAAAESLATRFIA) is cleaved from the precursor.

As to quaternary structure, part of a disulfide cross-linked outer membrane complex (COMC) composed of the major outer membrane porin (MOMP), the small cysteine-rich protein (omcA) and the large cysteine-rich periplasmic protein (omcB).

It is found in the periplasm. Functionally, in elementary bodies (EBs, the infectious stage, which is able to survive outside the host cell) provides the structural integrity of the outer envelope through disulfide cross-links with the small cysteine-rich protein and the major outer membrane porin. It has been described in publications as the Sarkosyl-insoluble COMC (Chlamydia outer membrane complex), and serves as the functional equivalent of peptidoglycan. The chain is Large cysteine-rich periplasmic protein omcB (omcB) from Chlamydia psittaci (Chlamydophila psittaci).